Here is a 322-residue protein sequence, read N- to C-terminus: tRNA-modifying protein YgfZ (322 aa).

Residue Trp182 coordinates folate.

It belongs to the tRNA-modifying YgfZ family.

The protein localises to the cytoplasm. In terms of biological role, folate-binding protein involved in regulating the level of ATP-DnaA and in the modification of some tRNAs. It is probably a key factor in regulatory networks that act via tRNA modification, such as initiation of chromosomal replication. The protein is tRNA-modifying protein YgfZ of Vibrio parahaemolyticus serotype O3:K6 (strain RIMD 2210633).